The sequence spans 757 residues: Large ribosomal subunit protein mL102 (rPPR5) (757 aa).

A compositionally biased stretch (polar residues) spans 39–55; that stretch reads EETQTPANANPETQSPD. A disordered region spans residues 39-82; it reads EETQTPANANPETQSPDAKSETKKNLTSTETRPLRERFQRGKRQ. Over residues 70–82 the composition is skewed to basic and acidic residues; that stretch reads RPLRERFQRGKRQ. 16 PPR repeats span residues 149–183, 184–218, 219–253, 254–288, 289–323, 324–358, 359–393, 395–429, 430–464, 473–507, 510–541, 542–576, 577–611, 614–648, 651–680, and 681–715; these read DRDT…GVPW, DEDM…GVER, TIKS…GVEP, TRHT…GISP, DDAT…KIGP, SVVS…GIEP, NATT…HIAP, DNSI…NVPA, EAGH…EIIL, EPSA…GVQD, ALNN…GVPR, ESNA…GHVP, DSSL…NVGI, NMDL…GHTA, DSLL…DLSL, and EFSS…GSST.

This sequence belongs to the PPR family. P subfamily. In terms of assembly, component of the mitochondrial ribosome large subunit.

Its subcellular location is the mitochondrion. The chain is Large ribosomal subunit protein mL102 (rPPR5) from Arabidopsis thaliana (Mouse-ear cress).